The primary structure comprises 366 residues: Ferredoxin--NADP reductase (366 aa).

Positions 51, 59, 64, 104, 139, 308, and 349 each coordinate FAD.

This sequence belongs to the ferredoxin--NADP reductase type 2 family. Homodimer. The cofactor is FAD.

The catalysed reaction is 2 reduced [2Fe-2S]-[ferredoxin] + NADP(+) + H(+) = 2 oxidized [2Fe-2S]-[ferredoxin] + NADPH. This Methylibium petroleiphilum (strain ATCC BAA-1232 / LMG 22953 / PM1) protein is Ferredoxin--NADP reductase.